The primary structure comprises 402 residues: Advanced glycosylation end product-specific receptor (402 aa).

The signal sequence occupies residues 1-22 (MPTGTVARAWVLVLALWGAVAG). Positions 23 to 109 (GQNITARIGE…ATNRLGKEVK (87 aa)) constitute an Ig-like V-type domain. Over 23–341 (GQNITARIGE…DGSGLGTLAL (319 aa)) the chain is Extracellular. Asn-25 and Asn-80 each carry an N-linked (GlcNAc...) asparagine glycan. 2 disulfides stabilise this stretch: Cys-38/Cys-98 and Cys-143/Cys-206. Ig-like C2-type domains lie at 123-219 (PEIV…RPLN) and 233-315 (PEGI…PPVN). Residues 342 to 362 (ALGILGGLGIAALLIGAILWR) form a helical membrane-spanning segment. The Cytoplasmic segment spans residues 363–402 (KRQPRLEERKAPESQEDEEERAELNQSEEAEMPENGAGGP). The tract at residues 368 to 402 (LEERKAPESQEDEEERAELNQSEEAEMPENGAGGP) is disordered. Ser-376 and Ser-389 each carry phosphoserine. The segment covering 376-394 (SQEDEEERAELNQSEEAEM) has biased composition (acidic residues).

Constitutive homodimer; disulfide-linked. Forms homooligomers. Interacts with S100A1 and APP. Interacts with S100B, S100A12 and S100A14. Interacts with TIRAP. Interacts with HMGB1. Interacts with LGP2; this interaction plays an important role in AGER-mediated pro-inflammatory responses and cytokine release. Interacts with double-strand break repair protein MRE11 which is a core component of the MRN complex; the interaction enhances MRE11 endonuclease activity and promotes DNA repair. Interacts with the MCM2-7 complex via interaction with complex member MCM2; the interaction is increased following DNA replication stress and stabilizes the MCM2-7 complex at replication forks. Post-translationally, phosphorylated on its cytoplasmic domain by PKCzeta/PRKCZ upon ligand binding. Phosphorylated by ATM following DNA damage. Targeted by the ubiquitin E3 ligase subunit FBXO10 to mediate its ubiquitination and degradation. Endothelial cells and cardiomyocytes. Expressed in brain.

Its subcellular location is the cell membrane. It is found in the cell projection. It localises to the phagocytic cup. The protein resides in the early endosome. The protein localises to the nucleus. Its function is as follows. Cell surface pattern recognition receptor that senses endogenous stress signals with a broad ligand repertoire including advanced glycation end products, S100 proteins, high-mobility group box 1 protein/HMGB1, amyloid beta/APP oligomers, nucleic acids, histones, phospholipids and glycosaminoglycans. Advanced glycosylation end products are nonenzymatically glycosylated proteins which accumulate in vascular tissue in aging and at an accelerated rate in diabetes. These ligands accumulate at inflammatory sites during the pathogenesis of various diseases including diabetes, vascular complications, neurodegenerative disorders and cancers, and RAGE transduces their binding into pro-inflammatory responses. Upon ligand binding, uses TIRAP and MYD88 as adapters to transduce the signal ultimately leading to the induction of inflammatory cytokines IL6, IL8 and TNFalpha through activation of NF-kappa-B. Interaction with S100A12 on endothelium, mononuclear phagocytes, and lymphocytes triggers cellular activation, with generation of key pro-inflammatory mediators. Interaction with S100B after myocardial infarction may play a role in myocyte apoptosis by activating ERK1/2 and p53/TP53 signaling. Contributes to the translocation of amyloid-beta peptide (ABPP) across the cell membrane from the extracellular to the intracellular space in cortical neurons. ABPP-initiated RAGE signaling, especially stimulation of p38 mitogen-activated protein kinase (MAPK), has the capacity to drive a transport system delivering ABPP as a complex with RAGE to the intraneuronal space. Participates in endothelial albumin transcytosis together with HMGB1 through the RAGE/SRC/Caveolin-1 pathway, leading to endothelial hyperpermeability. Mediates the loading of HMGB1 in extracellular vesicles (EVs) that shuttle HMGB1 to hepatocytes by transferrin-mediated endocytosis and subsequently promote hepatocyte pyroptosis by activating the NLRP3 inflammasome. Binds to DNA and promotes extracellular hypomethylated DNA (CpG DNA) uptake by cells via the endosomal route to activate inflammatory responses. Mediates phagocytosis by non-professional phagocytes (NPP) and this is enhanced by binding to ligands including RNA, DNA, HMGB1 and histones. Promotes NPP-mediated phagocytosis of Saccharomyces cerevisiae spores by binding to RNA attached to the spore wall. Also promotes NPP-mediated phagocytosis of apoptotic cells. Following DNA damage, recruited to DNA double-strand break sites where it colocalizes with the MRN repair complex via interaction with double-strand break repair protein MRE11. Enhances the endonuclease activity of MRE11, promoting the end resection of damaged DNA. Promotes DNA damage repair in trophoblasts which enhances trophoblast invasion and contributes to placental development and maintenance. Protects cells from DNA replication stress by localizing to damaged replication forks where it stabilizes the MCM2-7 complex and promotes faithful progression of the replication fork. This chain is Advanced glycosylation end product-specific receptor (Ager), found in Rattus norvegicus (Rat).